The following is a 709-amino-acid chain: Copper amine oxidase vicK1 (709 aa).

The signal sequence occupies residues 1-20; sequence MKLFLLFTLTLVNIFSVSLQ. Catalysis depends on aspartate 365, which acts as the Proton acceptor. Cysteine 383 and cysteine 408 form a disulfide bridge. Tyrosine 448 acts as the Schiff-base intermediate with substrate; via topaquinone in catalysis. Tyrosine 448 carries the 2',4',5'-topaquinone modification. Residues histidine 496 and histidine 498 each contribute to the Cu cation site. Aspartate 505, leucine 506, aspartate 507, glutamate 548, phenylalanine 641, glutamate 645, aspartate 651, and leucine 652 together coordinate Ca(2+). Cu cation is bound at residue histidine 662.

The protein belongs to the copper/topaquinone oxidase family. As to quaternary structure, homodimer; disulfide-linked. Cu cation is required as a cofactor. Requires Ca(2+) as cofactor. L-topaquinone serves as cofactor. Topaquinone (TPQ) is generated by copper-dependent autoxidation of a specific tyrosyl residue.

The protein operates within mycotoxin biosynthesis. Functionally, copper amine oxidase, part of the gene cluster that mediates the biosynthesis of the secondary metabolite victorin, the molecular basis for Victoria blight of oats. Within the pathway, vicK1 catalyzes the oxidative deamination of the N-terminal glycyl moiety of the hexapeptides in order to produce the active glyoxylate form victorins. The pathway starts with the processing of the precursor vicA1 by several endopeptidases including kexin proteases as well as the cluster-specific S28 family peptidases vicPa and vicPb to produce 7 identical copies of the hexapeptide Gly-Leu-Lys-Leu-Ala-Phe. After being excised from the precursor peptide, the core peptides are cyclized and modified post-translationally by enzymes encoded within the gene cluster. The ustYa family oxidase vicYb is required for the formation of the macrocycle in victorin and the copper amine oxidases (CAOs) vicK1 and vicK2 are responsible for converting victorin to the active form by oxidizing the N-terminal glycyl residue in the peptides to glyoxylate. Relaxed substrate specificity of enzymes in the victorin biosynthetic pathway results in a metabolic grid that produces a set of analogs including victorinines B, C, E or HV-toxin M. In Bipolaris victoriae (strain FI3) (Victoria blight of oats agent), this protein is Copper amine oxidase vicK1.